The sequence spans 414 residues: Serine/threonine transporter SstT (414 aa).

A run of 8 helical transmembrane segments spans residues 16-36 (GSLV…AWVS), 46-66 (LGTL…LMLV), 84-104 (ILFL…VFSF), 143-163 (ALLN…GFAL), 180-200 (AVTF…FGLV), 219-239 (LVVL…LLVF), 300-320 (MAGA…TLGV), and 332-352 (VVAS…LLLI).

It belongs to the dicarboxylate/amino acid:cation symporter (DAACS) (TC 2.A.23) family.

It localises to the cell inner membrane. It carries out the reaction L-serine(in) + Na(+)(in) = L-serine(out) + Na(+)(out). The enzyme catalyses L-threonine(in) + Na(+)(in) = L-threonine(out) + Na(+)(out). Functionally, involved in the import of serine and threonine into the cell, with the concomitant import of sodium (symport system). The chain is Serine/threonine transporter SstT from Salmonella arizonae (strain ATCC BAA-731 / CDC346-86 / RSK2980).